The sequence spans 259 residues: Global transcriptional regulator CodY (259 aa).

The tract at residues 1-155 (MELLAKTRKL…SSTVVGMEIL (155 aa)) is GAF domain. A DNA-binding region (H-T-H motif) is located at residues 203-222 (ASKIADRVGITRSVIVNALR). At Ser215 the chain carries Phosphoserine.

This sequence belongs to the CodY family.

The protein localises to the cytoplasm. DNA-binding global transcriptional regulator which is involved in the adaptive response to starvation and acts by directly or indirectly controlling the expression of numerous genes in response to nutrient availability. During rapid exponential growth, CodY is highly active and represses genes whose products allow adaptation to nutrient depletion. The chain is Global transcriptional regulator CodY from Bacillus mycoides (strain KBAB4) (Bacillus weihenstephanensis).